The primary structure comprises 381 residues: Homoserine O-acetyltransferase (381 aa).

Residues 47–359 (NAILICHALT…DKGHDAFLLD (313 aa)) enclose the AB hydrolase-1 domain. Residue serine 153 is the Nucleophile of the active site. Residue arginine 223 coordinates substrate. Active-site residues include aspartate 320 and histidine 353. Residue aspartate 354 participates in substrate binding.

This sequence belongs to the AB hydrolase superfamily. MetX family. Homodimer.

It localises to the cytoplasm. The enzyme catalyses L-homoserine + acetyl-CoA = O-acetyl-L-homoserine + CoA. It participates in amino-acid biosynthesis; L-methionine biosynthesis via de novo pathway; O-acetyl-L-homoserine from L-homoserine: step 1/1. Functionally, transfers an acetyl group from acetyl-CoA to L-homoserine, forming acetyl-L-homoserine. This chain is Homoserine O-acetyltransferase, found in Acidiphilium cryptum (strain JF-5).